Reading from the N-terminus, the 167-residue chain is 18.8 kDa class II heat shock protein (167 aa).

The sHSP domain maps to D49–A167.

The protein belongs to the small heat shock protein (HSP20) family.

The protein resides in the cytoplasm. The polypeptide is 18.8 kDa class II heat shock protein (SHSP-2) (Ipomoea nil (Japanese morning glory)).